The chain runs to 188 residues: MTIKSDKWIRRMAEQTGMIEPFEPGQVRQSNGQKIVSYGTSSYGYDIRCADEFKIFTNINSTIVDPKNFDENSFVDIKSDVCIIPPNSFALARTIEYFRIPRNVLTICLGKSTYARCGIIVNVTPFEPEWEGYVTLEFSNTTPLPAKIYAGEGCAQVLFFESDEVCETSYKDRGGKYQGQHGVTLPKT.

Residues 111 to 116 (KSTYAR), 135 to 137 (TLE), glutamine 156, tyrosine 170, and glutamine 180 contribute to the dCTP site. Glutamate 137 acts as the Proton donor/acceptor in catalysis.

Belongs to the dCTP deaminase family. Homotrimer.

It carries out the reaction dCTP + H2O + H(+) = dUTP + NH4(+). It functions in the pathway pyrimidine metabolism; dUMP biosynthesis; dUMP from dCTP (dUTP route): step 1/2. In terms of biological role, catalyzes the deamination of dCTP to dUTP. This chain is dCTP deaminase, found in Janthinobacterium sp. (strain Marseille) (Minibacterium massiliensis).